Consider the following 966-residue polypeptide: Insulin-degrading enzyme-like 2 (966 aa).

His-71 contributes to the Zn(2+) binding site. Glu-74 functions as the Proton acceptor in the catalytic mechanism. His-75 is a binding site for Zn(2+). Residue Glu-145 is part of the active site. Glu-152 contacts Zn(2+).

It belongs to the peptidase M16 family. Zn(2+) serves as cofactor.

This Arabidopsis thaliana (Mouse-ear cress) protein is Insulin-degrading enzyme-like 2.